The following is a 374-amino-acid chain: GDSL esterase/lipase 1 (374 aa).

An N-terminal signal peptide occupies residues 1–25; that stretch reads MENSQLVSITFLAYTIIISIGSINC. A glycan (N-linked (GlcNAc...) asparagine) is linked at Asn-34. Ser-44 functions as the Nucleophile in the catalytic mechanism. Residues Asn-184, Asn-203, and Asn-330 are each glycosylated (N-linked (GlcNAc...) asparagine). Catalysis depends on charge relay system residues Asp-338 and His-341. N-linked (GlcNAc...) asparagine glycosylation occurs at Asn-360.

This sequence belongs to the 'GDSL' lipolytic enzyme family.

The protein resides in the secreted. Confers resistance to the necrotrophic fungus Alternaria brassicicola. Possesses lipase and antimicrobial activities that directly disrupt fungal spore integrity. Triggers systemic resistance, mostly by the ethylene-dependent pathway. The protein is GDSL esterase/lipase 1 of Arabidopsis thaliana (Mouse-ear cress).